The following is a 495-amino-acid chain: Probable cytochrome P450 513C1 (495 aa).

A helical transmembrane segment spans residues 1 to 21; sequence MNYLVLILVSLVSIYFLFIKN. Cys-441 contacts heme.

This sequence belongs to the cytochrome P450 family. Heme is required as a cofactor.

The protein resides in the membrane. This is Probable cytochrome P450 513C1 (cyp513C1) from Dictyostelium discoideum (Social amoeba).